The chain runs to 136 residues: 5-hydroxyisourate hydrolase (136 aa).

Positions methionine 1–alanine 20 are cleaved as a signal peptide. Substrate contacts are provided by histidine 31, arginine 69, and tyrosine 133.

Belongs to the transthyretin family. 5-hydroxyisourate hydrolase subfamily. Homotetramer.

It is found in the periplasm. It carries out the reaction 5-hydroxyisourate + H2O = 5-hydroxy-2-oxo-4-ureido-2,5-dihydro-1H-imidazole-5-carboxylate + H(+). In terms of biological role, catalyzes the hydrolysis of 5-hydroxyisourate (HIU) to 2-oxo-4-hydroxy-4-carboxy-5-ureidoimidazoline (OHCU). This chain is 5-hydroxyisourate hydrolase (hiuH), found in Salmonella typhi.